The following is a 989-amino-acid chain: Clumping factor A (989 aa).

Residues 1 to 39 (MNMKKKEKHAIRKKSIGVASVLVGTLIGFGLLSSKEADA) form the signal peptide. Positions 9-20 (HAIRKKSIGVAS) match the YSIRK-G/S signaling motif motif. Disordered stretches follow at residues 34 to 205 (SKEA…VSQA) and 529 to 960 (FNNG…SEDE). The interval 40–542 (SENSVTQSDS…SGSGDGIDKP (503 aa)) is ligand binding A region. Residues 47-65 (SDSASNESKSNDSSSVSAA) show a composition bias toward low complexity. Over residues 71 to 105 (TNVSDTKTSSNTNNGETSVAQNPAQQETTQSSSTN) the composition is skewed to polar residues. Low complexity-rich tracts occupy residues 106-132 (ATTEETPVTGEATTTTTNQANTPATTQ) and 143-162 (NQTSNETTSNDTNTVSSVNS). Residues 163-205 (PQNSTNAENVSTTQDTSTEATPSNNESAPQNTDASNKDVVSQA) show a composition bias toward polar residues. The segment covering 547-565 (QPDEPGEIEPIPEDSDSDP) has biased composition (acidic residues). Residues 566 to 598 (GSDSGSDSNSDSGSDSGSDSTSDSGSDSASDSD) show a composition bias toward low complexity. Acidic residues predominate over residues 599-917 (SASDSDSASD…DNDSDSDSNS (319 aa)). Positions 918–936 (DSESGSNNNVVPPNSPKNG) are enriched in low complexity. Residues 943–952 (NEAKDSKEPL) are compositionally biased toward basic and acidic residues. The LPXTG sorting signal signature appears at 952 to 956 (LPDTG). T955 carries the pentaglycyl murein peptidoglycan amidated threonine modification. The propeptide at 956-989 (GSEDEANTSLIWGLLASLGSLLLFRRKKENKDKK) is removed by sortase.

Belongs to the serine-aspartate repeat-containing protein (SDr) family.

The protein resides in the secreted. It is found in the cell wall. Its function is as follows. Cell surface-associated protein implicated in virulence. Promotes bacterial attachment exclusively to the gamma-chain of human fibrinogen. Induces formation of bacterial clumps, which diminish the ability of group IIA phospholipase A2 to cause bacterial phospholipid hydrolysis and killing. Significantly decreases macrophage phagocytosis possibly thanks to the clumps, clumped bacteria being too large to be phagocytosed. Dominant factor responsible for human platelet aggregation, which may be an important mechanism for initiating infective endocarditis. This Staphylococcus aureus (strain N315) protein is Clumping factor A (clfA).